Here is a 752-residue protein sequence, read N- to C-terminus: Cation-transporting P-type ATPase B (752 aa).

An HMA domain is found at 15–78; it reads RRIRLDVLGM…VVEKAGYHAA (64 aa). Positions 26 and 29 each coordinate a metal cation. Helical transmembrane passes span 105–125, 132–152, 167–187, 201–221, 361–381, and 390–410; these read LLVA…FAIV, GWGY…AWPF, METL…SSVF, AILN…VFVL, IAGV…AAWL, and AFSV…GLAT. Catalysis depends on Asp446, which acts as the 4-aspartylphosphate intermediate. A run of 2 helical transmembrane segments spans residues 491–511 and 714–734; these read MAAA…FVAV and AIPI…AMAF.

This sequence belongs to the cation transport ATPase (P-type) (TC 3.A.3) family. Type IB subfamily.

The protein localises to the cell membrane. It catalyses the reaction ATP + H2O = ADP + phosphate + H(+). In Mycobacterium tuberculosis (strain ATCC 25618 / H37Rv), this protein is Cation-transporting P-type ATPase B (ctpB).